A 248-amino-acid polypeptide reads, in one-letter code: Tetraspanin-16 (248 aa).

Residues 1–7 (MSEIRTG) lie on the Cytoplasmic side of the membrane. A helical transmembrane segment spans residues 8-28 (FLTMATIILICIGLTMTGTGL). Residues 29-44 (YYRKTVSKCIRETDGS) are Extracellular-facing. A helical transmembrane segment spans residues 45-65 (FVVIGLLLLVIPQFALYAICC). Topologically, residues 66–69 (HSKR) are cytoplasmic. The helical transmembrane segment at 70-90 (MFTIYIYAMIFVSIVLGGYSL) threads the bilayer. Residues 91 to 208 (KCFIYNTTFG…MSILKAIVHQ (118 aa)) lie on the Extracellular side of the membrane. 2 N-linked (GlcNAc...) asparagine glycosylation sites follow: Asn-96 and Asn-141. The helical transmembrane segment at 209–229 (WKYLSMFSYPALFLVCLSLAI) threads the bilayer. At 230-248 (SRSIMDTFDEPDDYRGYYS) the chain is on the cytoplasmic side.

Belongs to the tetraspanin (TM4SF) family.

It localises to the membrane. Its function is as follows. May be involved in the regulation of cell differentiation. This is Tetraspanin-16 (TET16) from Arabidopsis thaliana (Mouse-ear cress).